The primary structure comprises 426 residues: Probable alpha-galactosidase B (426 aa).

An N-terminal signal peptide occupies residues 1–13 (MSRSKTRQGKLPA). Cystine bridges form between cysteine 24–cysteine 56 and cysteine 106–cysteine 136. Aspartate 134 acts as the Nucleophile in catalysis. N-linked (GlcNAc...) asparagine glycans are attached at residues asparagine 141 and asparagine 159. 204-208 (EWGQA) contacts substrate. A glycan (N-linked (GlcNAc...) asparagine) is linked at asparagine 215. The active-site Proton donor is aspartate 226. N-linked (GlcNAc...) asparagine glycosylation occurs at asparagine 265.

Belongs to the glycosyl hydrolase 27 family.

It is found in the secreted. The catalysed reaction is Hydrolysis of terminal, non-reducing alpha-D-galactose residues in alpha-D-galactosides, including galactose oligosaccharides, galactomannans and galactolipids.. Hydrolyzes a variety of simple alpha-D-galactoside as well as more complex molecules such as oligosaccharides and polysaccharides. This is Probable alpha-galactosidase B (aglB) from Aspergillus fumigatus (strain CBS 144.89 / FGSC A1163 / CEA10) (Neosartorya fumigata).